A 458-amino-acid polypeptide reads, in one-letter code: ATP synthase subunit beta (458 aa).

Residue 148-155 (GGAGVGKT) coordinates ATP.

The protein belongs to the ATPase alpha/beta chains family. In terms of assembly, F-type ATPases have 2 components, CF(1) - the catalytic core - and CF(0) - the membrane proton channel. CF(1) has five subunits: alpha(3), beta(3), gamma(1), delta(1), epsilon(1). CF(0) has three main subunits: a(1), b(2) and c(9-12). The alpha and beta chains form an alternating ring which encloses part of the gamma chain. CF(1) is attached to CF(0) by a central stalk formed by the gamma and epsilon chains, while a peripheral stalk is formed by the delta and b chains.

The protein resides in the cell inner membrane. It catalyses the reaction ATP + H2O + 4 H(+)(in) = ADP + phosphate + 5 H(+)(out). Its function is as follows. Produces ATP from ADP in the presence of a proton gradient across the membrane. The catalytic sites are hosted primarily by the beta subunits. The polypeptide is ATP synthase subunit beta (Ectopseudomonas mendocina (strain ymp) (Pseudomonas mendocina)).